A 117-amino-acid chain; its full sequence is Transcription elongation factor SPT4 (117 aa).

The interval 1–40 is interaction with SUPT5H; that stretch reads MALETVPKDLRHLRACLLCSLVKTIDQFEYDGCDNCDAYL. A C4-type zinc finger spans residues 16–36; sequence CLLCSLVKTIDQFEYDGCDNC.

The protein belongs to the SPT4 family. As to quaternary structure, interacts with SUPT5H to form the DSIF complex. DSIF interacts with RNA polymerase II and with the positive transcription elongation factor b complex (P-TEFb complex), which is composed of CDK9 and cyclin-T.

Its subcellular location is the nucleus. Functionally, may function as a component of the DRB sensitivity-inducing factor complex (DSIF complex), which regulates transcription elongation by RNA polymerase II. Probably enhances transcriptional pausing at sites proximal to the promoter, which may in turn facilitate the assembly of an elongation competent RNA polymerase II complex. The chain is Transcription elongation factor SPT4 (supt4h1) from Xenopus laevis (African clawed frog).